Consider the following 512-residue polypeptide: Cytochrome P450 84A4 (512 aa).

A helical membrane pass occupies residues 7–24; it reads LIVLVPLLLFLFPHLLLR. Residue cysteine 447 participates in heme binding.

The protein belongs to the cytochrome P450 family. It depends on heme as a cofactor. Expressed in seedlings, roots, stems and inflorescence nodes. Low or no expression in leaves, flowers, seeds and lignifying tissue.

The protein resides in the membrane. In terms of biological role, cytochrome P450 involved in the production of catechol-substituted substrates needed for the arabidopyrones biosynthesis. Converts p-coumaraldehyde into caffealdehyde. The protein is Cytochrome P450 84A4 (CYP84A4) of Arabidopsis thaliana (Mouse-ear cress).